A 214-amino-acid polypeptide reads, in one-letter code: Large ribosomal subunit protein uL3 (214 aa).

The segment at lysine 131–glutamine 153 is disordered. Residues serine 132–valine 145 show a composition bias toward polar residues. Position 153 is an N5-methylglutamine (glutamine 153).

Belongs to the universal ribosomal protein uL3 family. As to quaternary structure, part of the 50S ribosomal subunit. Forms a cluster with proteins L14 and L19. Post-translationally, methylated by PrmB.

Functionally, one of the primary rRNA binding proteins, it binds directly near the 3'-end of the 23S rRNA, where it nucleates assembly of the 50S subunit. The polypeptide is Large ribosomal subunit protein uL3 (Thiobacillus denitrificans (strain ATCC 25259 / T1)).